The sequence spans 369 residues: L-lactate oxidase (369 aa).

Residues E13 to Y369 enclose the FMN hydroxy acid dehydrogenase domain. Pyruvate is bound at residue Y39. FMN is bound by residues P92–A94, S121, and Q143. Y145 is a binding site for pyruvate. T171 contributes to the FMN binding site. R180 provides a ligand contact to pyruvate. K240 and S262 together coordinate FMN. The pyruvate site is built by H264 and R267. The active-site Proton acceptor is H264. FMN-binding positions include D295–R299 and R319.

It belongs to the FMN-dependent alpha-hydroxy acid dehydrogenase family. Homotetramer. Requires FMN as cofactor.

It catalyses the reaction (S)-lactate + O2 = pyruvate + H2O2. Functionally, catalyzes the oxidation of (S)-lactate (L-lactate) to pyruvate, with a reduction of O2 to H2O2. May be involved in the utilization of L-lactate as an energy source for growth. This Lentilactobacillus hilgardii (strain ATCC 8290 / DSM 20176 / CCUG 30140 / JCM 1155 / KCTC 3500 / NBRC 15886 / NCIMB 8040 / NRRL B-1843 / 9) protein is L-lactate oxidase.